The sequence spans 179 residues: Ribosome maturation factor RimM (179 aa).

The 73-residue stretch at 98–170 (PDEFWDRRLR…RIVVSGIPGL (73 aa)) folds into the PRC barrel domain.

Belongs to the RimM family. In terms of assembly, binds ribosomal protein uS19.

The protein localises to the cytoplasm. Its function is as follows. An accessory protein needed during the final step in the assembly of 30S ribosomal subunit, possibly for assembly of the head region. Essential for efficient processing of 16S rRNA. May be needed both before and after RbfA during the maturation of 16S rRNA. It has affinity for free ribosomal 30S subunits but not for 70S ribosomes. This is Ribosome maturation factor RimM from Cutibacterium acnes (strain DSM 16379 / KPA171202) (Propionibacterium acnes).